Reading from the N-terminus, the 164-residue chain is SsrA-binding protein (164 aa).

The segment at 141–164 (KLHDKRQDEKQKSIKKEINSALKR) is disordered. Residues 145-158 (KRQDEKQKSIKKEI) are compositionally biased toward basic and acidic residues.

It belongs to the SmpB family.

The protein localises to the cytoplasm. Required for rescue of stalled ribosomes mediated by trans-translation. Binds to transfer-messenger RNA (tmRNA), required for stable association of tmRNA with ribosomes. tmRNA and SmpB together mimic tRNA shape, replacing the anticodon stem-loop with SmpB. tmRNA is encoded by the ssrA gene; the 2 termini fold to resemble tRNA(Ala) and it encodes a 'tag peptide', a short internal open reading frame. During trans-translation Ala-aminoacylated tmRNA acts like a tRNA, entering the A-site of stalled ribosomes, displacing the stalled mRNA. The ribosome then switches to translate the ORF on the tmRNA; the nascent peptide is terminated with the 'tag peptide' encoded by the tmRNA and targeted for degradation. The ribosome is freed to recommence translation, which seems to be the essential function of trans-translation. In Prochlorococcus marinus (strain MIT 9301), this protein is SsrA-binding protein.